Consider the following 937-residue polypeptide: Diacylglycerol kinase theta (937 aa).

The tract at residues methionine 1 to isoleucine 48 is disordered. Residues serine 22 and serine 26 each carry the phosphoserine modification. 3 Phorbol-ester/DAG-type zinc fingers span residues glycine 54 to cysteine 102, alanine 115 to cysteine 162, and histidine 177 to cysteine 228. The tract at residues glycine 359–valine 378 is disordered. Residues threonine 390 to alanine 489 form the Ras-associating domain. 2 consecutive short sequence motifs (LXXLL motif) follow at residues leucine 550 to alanine 554 and leucine 569 to leucine 573. The region spanning proline 579–alanine 716 is the DAGKc domain. The disordered stretch occupies residues alanine 911–leucine 937.

It belongs to the eukaryotic diacylglycerol kinase family. As to quaternary structure, interacts with RHOA (constitutively activated, GTP-bound); the interaction inhibits DGKQ. Interacts with PRKCE. Interacts with PRKCH. Interacts with PLCB1. Interacts with NR5A1; the interaction requires both LXXLL motifs in DGKQ and is required for full phosphatidic acid-mediated activation of NR5A1. Phosphorylated by PRKCE and PRKCH in vitro. As to expression, widely expressed with higher expression in the brain and, to a lesser extent, in the small intestine, duodenum, and liver. In brain, expressed in gray matter. Expression is most intense in the cerebellar cortex and hippocampus, while moderate expression is seen in the olfactory bulb neuronal layers and brain stem nuclei. In the cerebellar cortex, equally expressed in both the Purkinje cell somata and the granule cells.

It is found in the cytoplasm. The protein localises to the cytosol. The protein resides in the cell membrane. Its subcellular location is the synapse. It localises to the cytoskeleton. It is found in the nucleus. The protein localises to the nucleus speckle. The protein resides in the nucleus matrix. It catalyses the reaction a 1,2-diacyl-sn-glycerol + ATP = a 1,2-diacyl-sn-glycero-3-phosphate + ADP + H(+). The catalysed reaction is a 1-O-alkyl-sn-glycerol + ATP = a 1-O-alkyl-sn-glycero-3-phosphate + ADP + H(+). It carries out the reaction 1-O-alkyl-2-acyl-sn-glycerol + ATP = 1-O-alkyl-2-acyl-sn-glycero-3-phosphate + ADP + H(+). The enzyme catalyses 1,2-di-(9Z-octadecenoyl)-sn-glycerol + ATP = 1,2-di-(9Z-octadecenoyl)-sn-glycero-3-phosphate + ADP + H(+). It catalyses the reaction 1-O-hexadecyl-sn-glycerol + ATP = 1-O-hexadecyl-sn-glycero-3-phosphate + ADP + H(+). The catalysed reaction is 1-O-hexadecyl-2-acetyl-sn-glycerol + ATP = 1-O-hexadecyl-2-acetyl-sn-glycero-3-phosphate + ADP + H(+). It carries out the reaction 1-octadecanoyl-2-(5Z,8Z,11Z,14Z-eicosatetraenoyl)-sn-glycerol + ATP = 1-octadecanoyl-2-(5Z,8Z,11Z,14Z-eicosatetraenoyl)-sn-glycero-3-phosphate + ADP + H(+). It functions in the pathway lipid metabolism; glycerolipid metabolism. Its activity is regulated as follows. Activated by phosphatidylserine. In terms of biological role, diacylglycerol kinase that converts diacylglycerol/DAG into phosphatidic acid/phosphatidate/PA and regulates the respective levels of these two bioactive lipids. Thereby, acts as a central switch between the signaling pathways activated by these second messengers with different cellular targets and opposite effects in numerous biological processes. Within the adrenocorticotropic hormone signaling pathway, produces phosphatidic acid which in turn activates NR5A1 and subsequent steroidogenic gene transcription. Also functions downstream of the nerve growth factor signaling pathway being specifically activated in the nucleus by the growth factor. Through its diacylglycerol activity also regulates synaptic vesicle endocytosis. The protein is Diacylglycerol kinase theta of Rattus norvegicus (Rat).